A 196-amino-acid chain; its full sequence is dCTP deaminase (196 aa).

DCTP is bound by residues 113-118, Asp131, 139-141, Tyr174, Lys181, and Gln185; these read RSSLAR and VLE. Residue Glu141 is the Proton donor/acceptor of the active site.

Belongs to the dCTP deaminase family. In terms of assembly, homotrimer.

It catalyses the reaction dCTP + H2O + H(+) = dUTP + NH4(+). It participates in pyrimidine metabolism; dUMP biosynthesis; dUMP from dCTP (dUTP route): step 1/2. Functionally, catalyzes the deamination of dCTP to dUTP. This is dCTP deaminase from Wigglesworthia glossinidia brevipalpis.